Consider the following 446-residue polypeptide: Maltoporin (446 aa).

Positions 1 to 25 (MMITLRKLPLAVAVAAGVMSAQAMA) are cleaved as a signal peptide.

Belongs to the porin LamB (TC 1.B.3) family. Homotrimer formed of three 18-stranded antiparallel beta-barrels, containing three independent channels.

It is found in the cell outer membrane. The enzyme catalyses beta-maltose(in) = beta-maltose(out). Involved in the transport of maltose and maltodextrins. This Escherichia coli O157:H7 (strain EC4115 / EHEC) protein is Maltoporin.